A 223-amino-acid chain; its full sequence is Endonuclease V (223 aa).

Mg(2+) is bound by residues aspartate 35 and aspartate 103.

The protein belongs to the endonuclease V family. Mg(2+) is required as a cofactor.

It is found in the cytoplasm. The enzyme catalyses Endonucleolytic cleavage at apurinic or apyrimidinic sites to products with a 5'-phosphate.. Functionally, DNA repair enzyme involved in the repair of deaminated bases. Selectively cleaves double-stranded DNA at the second phosphodiester bond 3' to a deoxyinosine leaving behind the intact lesion on the nicked DNA. In Escherichia coli O45:K1 (strain S88 / ExPEC), this protein is Endonuclease V.